Here is a 439-residue protein sequence, read N- to C-terminus: Acetyl esterase Axe7A (439 aa).

A signal peptide spans methionine 1–alanine 31. Serine 309 serves as the catalytic Nucleophile. Active-site charge relay system residues include aspartate 391 and histidine 420.

It belongs to the carbohydrate esterase 7 family.

It functions in the pathway glycan degradation; xylan degradation. In terms of biological role, involved in degradation of plant cell wall polysaccharides. Has acetyl esterase activity towards a broad range of substrates including xylose-tetraacetate, 4-O-methylumbelliferyl acetate, glucose-pentaacetate, cephalosporin C, and acetylated xylo-oligosaccharides smaller than xylo-heptaose. Displays no detectable activity on polymeric acetylated xylan. The protein is Acetyl esterase Axe7A of Xylanibacter ruminicola (strain ATCC 19189 / DSM 19721 / CIP 105475 / JCM 8958 / 23) (Prevotella ruminicola).